We begin with the raw amino-acid sequence, 452 residues long: Phosphatidylinositol N-acetylglucosaminyltransferase GPI3 subunit (452 aa).

Residues 407 to 427 (LYLLCGIVEYMLFFLLEWLYP) form a helical membrane-spanning segment.

This sequence belongs to the glycosyltransferase group 1 family. In terms of assembly, component of the phosphatidylinositol N-acetylglucosaminyltransferase complex composed of at least GPI1, GPI2, GPI3, GPI15, GPI19 and ERI1.

The protein localises to the endoplasmic reticulum membrane. It carries out the reaction a 1,2-diacyl-sn-glycero-3-phospho-(1D-myo-inositol) + UDP-N-acetyl-alpha-D-glucosamine = a 6-(N-acetyl-alpha-D-glucosaminyl)-1-(1,2-diacyl-sn-glycero-3-phospho)-1D-myo-inositol + UDP + H(+). The protein operates within glycolipid biosynthesis; glycosylphosphatidylinositol-anchor biosynthesis. Its activity is regulated as follows. Inhibited by Ras, probably via the interaction between RAS2 and ERI1. Functionally, catalytic subunit in the complex catalyzing the transfer of N-acetylglucosamine from UDP-N-acetylglucosamine to phosphatidylinositol, the first step of GPI biosynthesis. The polypeptide is Phosphatidylinositol N-acetylglucosaminyltransferase GPI3 subunit (SPT14) (Saccharomyces cerevisiae (strain YJM789) (Baker's yeast)).